Reading from the N-terminus, the 272-residue chain is HMP-PP phosphatase (272 aa).

Residue Asp8 is the Nucleophile of the active site. Residues Asp8, Asp10, and Asp212 each contribute to the Mg(2+) site.

Belongs to the HAD-like hydrolase superfamily. Cof family. Mg(2+) is required as a cofactor.

It carries out the reaction 4-amino-2-methyl-5-(diphosphooxymethyl)pyrimidine + H2O = 4-amino-2-methyl-5-(phosphooxymethyl)pyrimidine + phosphate + H(+). Its function is as follows. Catalyzes the hydrolysis of 4-amino-2-methyl-5-hydroxymethylpyrimidine pyrophosphate (HMP-PP) to 4-amino-2-methyl-5-hydroxymethylpyrimidine phosphate (HMP-P). The polypeptide is HMP-PP phosphatase (Shigella flexneri serotype 5b (strain 8401)).